A 487-amino-acid polypeptide reads, in one-letter code: MDLDEAFLYIGEFGCCQKRLTAFLTLLQVYVACQSMLIVLVGAVPEYLIDNEDISASKEEYTKHLHDTNNFTSIVSEWHLIKNEAYKVNLASSLFFAGLLIGNILFGPLSDKLGRRPVYLSGLFFDITFGYCTALAPSYEVFAVSRFFVGIMNGGMALVSFVLTQEYVGKSYWALTGSLTNLIFAVGIAFYALLGFYIRNWRTLAFVANSPGIFFFLLSFLLPESPRWLYSHGYTTEAEGVLQSMAVGNGVERPVVKLKSCPGTSSKSAHSVFDLVKYGVLRWRTILLMYIWYVCSLVYYGLTLNAGELKGNLYLNVALYGLVEVPAFPLCLYFIEKSWSGRRKATAGFLGFAGFACIFTIFLPETNGDLLNPTVLALFGKLSVSAAFNVVYIYTSELYPTVVRNAGLGVCAMACRFGGILSPFIPTMKSLNPSMPFVAFGISGISAGILSLLLPETRNKPIAESIEDLQSPAYQLLSRGNEVLAST.

A helical transmembrane segment spans residues 22 to 42; sequence AFLTLLQVYVACQSMLIVLVG. Asparagine 70 carries an N-linked (GlcNAc...) asparagine glycan. 11 consecutive transmembrane segments (helical) span residues 90–110, 117–137, 141–161, 178–198, 203–223, 286–306, 315–335, 345–365, 374–394, 406–426, and 435–455; these read LASS…GPLS, PVYL…ALAP, VFAV…LVSF, SLTN…GFYI, TLAF…FLLP, ILLM…TLNA, LNVA…LYFI, ATAG…FLPE, TVLA…VYIY, AGLG…PFIP, and MPFV…LLLP.

It belongs to the major facilitator (TC 2.A.1) superfamily. Organic cation transporter (TC 2.A.1.19) family.

The protein localises to the membrane. Functionally, probably transports organic cations. This is Solute carrier family 22 member 15-like (slc22a15b) from Xenopus tropicalis (Western clawed frog).